Reading from the N-terminus, the 144-residue chain is Large ribosomal subunit protein uL15 (144 aa).

The segment at 1–49 is disordered; sequence MRLNTLSPAAGAKSAAKRVGRGIGSGLGKTAGRGHKGQKSRSGGGVRVG. Positions 21–31 are enriched in gly residues; the sequence is RGIGSGLGKTA.

This sequence belongs to the universal ribosomal protein uL15 family. As to quaternary structure, part of the 50S ribosomal subunit.

Functionally, binds to the 23S rRNA. The polypeptide is Large ribosomal subunit protein uL15 (Shewanella piezotolerans (strain WP3 / JCM 13877)).